Consider the following 216-residue polypeptide: Somatotropin (216 aa).

The N-terminal stretch at 1–25 (MAPGSWFSPLLIAVVTLGLPQGAAA) is a signal peptide. Residue His45 coordinates Zn(2+). A disulfide bond links Cys78 and Cys189. Residue Glu198 coordinates Zn(2+). Cys206 and Cys214 are disulfide-bonded.

The protein belongs to the somatotropin/prolactin family. As to expression, pituitary gland.

Its subcellular location is the secreted. Its function is as follows. Growth hormone plays an important role in growth control. This is Somatotropin (GH) from Meleagris gallopavo (Wild turkey).